The following is a 185-amino-acid chain: Ribosome-recycling factor (185 aa).

The protein belongs to the RRF family.

The protein localises to the cytoplasm. Functionally, responsible for the release of ribosomes from messenger RNA at the termination of protein biosynthesis. May increase the efficiency of translation by recycling ribosomes from one round of translation to another. The polypeptide is Ribosome-recycling factor (Haemophilus influenzae (strain 86-028NP)).